The primary structure comprises 551 residues: Thermolysin (551 aa).

The first 31 residues, Met-1–Ala-31, serve as a signal peptide directing secretion. The propeptide at Ser-32–Ser-235 is activation peptide. The Ca(2+) site is built by Asp-292, Asp-294, Gln-296, and Asp-373. Residue His-377 participates in Zn(2+) binding. The active site involves Glu-378. His-381 and Glu-401 together coordinate Zn(2+). Ca(2+)-binding residues include Glu-412, Asn-418, Asp-420, Glu-422, Glu-425, Thr-429, Ile-432, and Asp-435. The active-site Proton donor is the His-466.

Belongs to the peptidase M4 family. Ca(2+) is required as a cofactor. Zn(2+) serves as cofactor.

The protein resides in the secreted. The enzyme catalyses Preferential cleavage: Xaa-|-Leu &gt; Xaa-|-Phe.. Its function is as follows. Extracellular zinc metalloprotease. This is Thermolysin (nprS) from Geobacillus stearothermophilus (Bacillus stearothermophilus).